A 547-amino-acid polypeptide reads, in one-letter code: Glucose-6-phosphate isomerase (547 aa).

Glutamate 351 functions as the Proton donor in the catalytic mechanism. Residues histidine 382 and lysine 509 contribute to the active site.

This sequence belongs to the GPI family.

The protein localises to the cytoplasm. The catalysed reaction is alpha-D-glucose 6-phosphate = beta-D-fructose 6-phosphate. Its pathway is carbohydrate biosynthesis; gluconeogenesis. The protein operates within carbohydrate degradation; glycolysis; D-glyceraldehyde 3-phosphate and glycerone phosphate from D-glucose: step 2/4. In terms of biological role, catalyzes the reversible isomerization of glucose-6-phosphate to fructose-6-phosphate. The polypeptide is Glucose-6-phosphate isomerase (Coxiella burnetii (strain Dugway 5J108-111)).